We begin with the raw amino-acid sequence, 365 residues long: Peptide chain release factor 2 (365 aa).

Position 252 is an N5-methylglutamine (Q252).

The protein belongs to the prokaryotic/mitochondrial release factor family. In terms of processing, methylated by PrmC. Methylation increases the termination efficiency of RF2.

Its subcellular location is the cytoplasm. Functionally, peptide chain release factor 2 directs the termination of translation in response to the peptide chain termination codons UGA and UAA. In Aliivibrio fischeri (strain ATCC 700601 / ES114) (Vibrio fischeri), this protein is Peptide chain release factor 2.